Reading from the N-terminus, the 114-residue chain is Cytochrome c oxidase subunit 7A2-like, mitochondrial (114 aa).

The transit peptide at 1 to 55 (MYYKFSGFTQKLAGAWASDAYSPQGLRPVVSTEAPPIIFATPTKLSSGPTAYDYA) directs the protein to the mitochondrion. The residue at position 69 (K69) is an N6-acetyllysine. The helical transmembrane segment at 82-107 (PDQMLYRTTMALTVGGTIYCLIALYM) threads the bilayer.

The protein belongs to the cytochrome c oxidase VIIa family. As to quaternary structure, interacts with the mitochondrial respiratory complexes III (CIII) and IV (CIV), promoting their association.

It is found in the mitochondrion inner membrane. Its function is as follows. Assembly factor that mediates the formation of some mitochondrial respiratory supercomplexes (respirasomes), thereby promoting oxidative phosphorylation and energy metabolism. Acts as a molecular adapter that associates with both mitochondrial respiratory complexes III (CIII) and IV (CIV), promoting their association. Mediates the formation of various mitochondrial respiratory supercomplexes, such as MCIII(2)IV(2), composed of two CIII and two CIV, and the CS-respirasome (MCI(1)III(2)IV(2)), composed of one CI, two CIII and two CIV. Not involved in the formation of the canonical respirasome (MCI(1)III(2)IV(1)), composed of one CI, two CIII and one CIV. The formation of different respirasomes is important for cell adaptation to oxygen conditions and prevent metabolic exhaustion: supercomplexes mediated by COX7A2L/SCAF1 are required to maintain oxidative phosphorylation upon low oxygen conditions and promote metabolic rewiring toward glycolysis. The polypeptide is Cytochrome c oxidase subunit 7A2-like, mitochondrial (Bos taurus (Bovine)).